Reading from the N-terminus, the 288-residue chain is 4-diphosphocytidyl-2-C-methyl-D-erythritol kinase (288 aa).

K19 is a catalytic residue. 102–112 (PMGGGIGGGSS) lines the ATP pocket. D144 is a catalytic residue.

This sequence belongs to the GHMP kinase family. IspE subfamily.

The enzyme catalyses 4-CDP-2-C-methyl-D-erythritol + ATP = 4-CDP-2-C-methyl-D-erythritol 2-phosphate + ADP + H(+). Its pathway is isoprenoid biosynthesis; isopentenyl diphosphate biosynthesis via DXP pathway; isopentenyl diphosphate from 1-deoxy-D-xylulose 5-phosphate: step 3/6. Catalyzes the phosphorylation of the position 2 hydroxy group of 4-diphosphocytidyl-2C-methyl-D-erythritol. The protein is 4-diphosphocytidyl-2-C-methyl-D-erythritol kinase of Pseudomonas savastanoi pv. phaseolicola (strain 1448A / Race 6) (Pseudomonas syringae pv. phaseolicola (strain 1448A / Race 6)).